The following is a 509-amino-acid chain: ATP synthase subunit alpha (509 aa).

An ATP-binding site is contributed by 169–176 (GDRQTGKT).

It belongs to the ATPase alpha/beta chains family. As to quaternary structure, F-type ATPases have 2 components, CF(1) - the catalytic core - and CF(0) - the membrane proton channel. CF(1) has five subunits: alpha(3), beta(3), gamma(1), delta(1), epsilon(1). CF(0) has four main subunits: a(1), b(1), b'(1) and c(9-12).

The protein resides in the cell inner membrane. It catalyses the reaction ATP + H2O + 4 H(+)(in) = ADP + phosphate + 5 H(+)(out). Its function is as follows. Produces ATP from ADP in the presence of a proton gradient across the membrane. The alpha chain is a regulatory subunit. This chain is ATP synthase subunit alpha, found in Erythrobacter litoralis (strain HTCC2594).